Reading from the N-terminus, the 541-residue chain is MFSWMGRQAGGRERAGGADAVQTVTGGLRSLYLRKVLPLEEAYRFHEFHSPALEDADFENKPMILLVGQYSTGKTTFIRYLLEQDFPGMRIGPEPTTDSFIAVMYGETEGSTPGNALVVDPKKPFRKLSRFGNAFLNRFMCSQLPNQVLKSISVIDSPGILSGEKQRISRGYDFCQVLQWFAERVDRIILLFDAHKLDISDEFSEAIKAFRGQDDKIRVVLNKADQVDTQQLMRVYGALMWSLGKVINTPEVLRVYIGSFWAQPLQNTDNRRLFEAEAQDLFRDIQSLPQKAAVRKLNDLIKRARLAKVHAYIISYLKKEMPSVFGKENKKRELISRLPEIYIQLQREYQISAGDFPEVKAMQEQLENYDFTKFHSLKPKLIEAVDNMLSNKISPLMNLISQEETSTPTQLVQGGAFDGTTEGPFNQGYGEGAKEGADEEEWVVAKDKPVYDELFYTLSPINGKISGVNAKKEMVTSKLPNSVLGKIWKLADCDCDGMLDEEEFALAKHLIKIKLDGYELPSSLPPHLVPPSHRKSLPKAD.

At M1 the chain carries N-acetylmethionine. The region spanning 58-289 (FENKPMILLV…DLFRDIQSLP (232 aa)) is the Dynamin-type G domain. Residues 68–75 (GQYSTGKT) form a G1 motif region. Residue 68–75 (GQYSTGKT) participates in ATP binding. Positions 94–95 (EP) are G2 motif. The tract at residues 156-159 (DSPG) is G3 motif. The residue at position 162 (S162) is a Phosphoserine. Positions 222–225 (NKAD) are G4 motif. K223 contacts ATP. Residue V246 is a region of interest, G5 motif. Position 261 (W261) interacts with ATP. The EH domain maps to 447–535 (DKPVYDELFY…PHLVPPSHRK (89 aa)). Phosphotyrosine is present on Y451. Position 459 is a phosphoserine (S459). The 36-residue stretch at 479-514 (LPNSVLGKIWKLADCDCDGMLDEEEFALAKHLIKIK) folds into the EF-hand domain. Ca(2+)-binding residues include D492, D494, D496, M498, and E503.

Belongs to the TRAFAC class dynamin-like GTPase superfamily. Dynamin/Fzo/YdjA family. EHD subfamily. Homooligomer, and heterooligomer with EHD1, EHD2 and EHD3. Forms a complex with EHD4 and MICALL1; the complex controls CDH5 trafficking and coordinates angiogenesis. In terms of tissue distribution, highly expressed in pancreas and heart.

The protein resides in the early endosome membrane. It localises to the recycling endosome membrane. The protein localises to the cell membrane. It is found in the cell junction. Its subcellular location is the adherens junction. Its function is as follows. ATP- and membrane-binding protein that probably controls membrane reorganization/tubulation upon ATP hydrolysis. Plays a role in early endosomal transport. During sprouting angiogenesis, in complex with PACSIN2 and MICALL1, forms recycling endosome-like tubular structure at asymmetric adherens junctions to control CDH5 trafficking. The sequence is that of EH domain-containing protein 4 from Homo sapiens (Human).